Reading from the N-terminus, the 704-residue chain is Polyribonucleotide nucleotidyltransferase (704 aa).

Residues Asp485 and Asp491 each contribute to the Mg(2+) site. Residues 552–611 (PKILTMTINPDKIRDVIGPSGKMINKIIEDTGVKIDIEQDGTIYISSADTNMNNKAREII) enclose the KH domain. The S1 motif domain occupies 621–689 (GQMYLGTVKR…NQGRVNLSRK (69 aa)).

The protein belongs to the polyribonucleotide nucleotidyltransferase family. The cofactor is Mg(2+).

The protein localises to the cytoplasm. The catalysed reaction is RNA(n+1) + phosphate = RNA(n) + a ribonucleoside 5'-diphosphate. Its function is as follows. Involved in mRNA degradation. Catalyzes the phosphorolysis of single-stranded polyribonucleotides processively in the 3'- to 5'-direction. The protein is Polyribonucleotide nucleotidyltransferase of Halalkalibacterium halodurans (strain ATCC BAA-125 / DSM 18197 / FERM 7344 / JCM 9153 / C-125) (Bacillus halodurans).